Reading from the N-terminus, the 290-residue chain is MRPATKIYGLIGRAVDYSYSPLIHNTAFEQLSLPCRYTIFNITEEHLVADALKGARALGLAGFSVTIPYKKTVVPLLDSLSEEAKSIQAVNTIVNHEGTLVGHNTDIAGFASPLLPHARSIQGRPVAILGSGGASLAAIEAFRTLFMPSEITLFMRNPAKETRMTDPAIKRCALGDLRESGSESSALLRDAAVVINATPVGTLGRPDAHMSPVPAESNLLHQGQIIYDMVYNPLDTPLLLAARKAGAVTIPGMEMLLAQGAAAFRLWTNLEMPMDAVRSALLNEIGASAI.

Residues 18–20 (SYS) and threonine 66 each bind shikimate. The Proton acceptor role is filled by lysine 70. An NADP(+)-binding site is contributed by glutamate 82. Positions 91 and 106 each coordinate shikimate. NADP(+) is bound by residues 130-134 (GSGGA) and methionine 229. Residue tyrosine 231 participates in shikimate binding. Residue glycine 252 participates in NADP(+) binding.

This sequence belongs to the shikimate dehydrogenase family. Homodimer.

It carries out the reaction shikimate + NADP(+) = 3-dehydroshikimate + NADPH + H(+). Its pathway is metabolic intermediate biosynthesis; chorismate biosynthesis; chorismate from D-erythrose 4-phosphate and phosphoenolpyruvate: step 4/7. Its function is as follows. Involved in the biosynthesis of the chorismate, which leads to the biosynthesis of aromatic amino acids. Catalyzes the reversible NADPH linked reduction of 3-dehydroshikimate (DHSA) to yield shikimate (SA). The protein is Shikimate dehydrogenase (NADP(+)) of Chlorobium phaeovibrioides (strain DSM 265 / 1930) (Prosthecochloris vibrioformis (strain DSM 265)).